The chain runs to 331 residues: Elongation factor Ts, mitochondrial (331 aa).

Residues 254 to 295 (SPLTVGEMPEVREEEGEKKDGDKQDEEERSTDSDEDETQMLR) are disordered. Over residues 262–275 (PEVREEEGEKKDGD) the composition is skewed to basic and acidic residues. Residues 276-291 (KQDEEERSTDSDEDET) are compositionally biased toward acidic residues.

The protein belongs to the EF-Ts family.

The protein localises to the mitochondrion. In terms of biological role, associates with the EF-Tu.GDP complex and induces the exchange of GDP to GTP. It remains bound to the aminoacyl-tRNA.EF-Tu.GTP complex up to the GTP hydrolysis stage on the ribosome. The sequence is that of Elongation factor Ts, mitochondrial from Branchiostoma floridae (Florida lancelet).